Reading from the N-terminus, the 69-residue chain is Sec-independent protein translocase protein TatA (69 aa).

The chain crosses the membrane as a helical span at residues 1-21; the sequence is MFGLGTMEMVIILVIVLVIFG. The tract at residues 44 to 69 is disordered; that stretch reads NAEDDAPAEPEVSKPAAAESTEKKDA.

It belongs to the TatA/E family. The Tat system comprises two distinct complexes: a TatABC complex, containing multiple copies of TatA, TatB and TatC subunits, and a separate TatA complex, containing only TatA subunits. Substrates initially bind to the TatABC complex, which probably triggers association of the separate TatA complex to form the active translocon.

Its subcellular location is the cell inner membrane. Functionally, part of the twin-arginine translocation (Tat) system that transports large folded proteins containing a characteristic twin-arginine motif in their signal peptide across membranes. TatA could form the protein-conducting channel of the Tat system. In Magnetococcus marinus (strain ATCC BAA-1437 / JCM 17883 / MC-1), this protein is Sec-independent protein translocase protein TatA.